The sequence spans 139 residues: Large ribosomal subunit protein eL34 (139 aa).

The segment at 113–139 (VSKPPKIAKAPAAAAAAKPAKTATKSK) is disordered.

It belongs to the eukaryotic ribosomal protein eL34 family.

The sequence is that of Large ribosomal subunit protein eL34 (RpL34) from Ochlerotatus triseriatus (Eastern treehole mosquito).